The primary structure comprises 932 residues: Chaperone protein ClpC3, chloroplastic (932 aa).

Residues 1-20 (MERTLLNPPPSLRSPACRTT) form a disordered region. A chloroplast-targeting transit peptide spans 1 to 48 (MERTLLNPPPSLRSPACRTTTATRIRPSSSMATMIPTPPPMRHARLVK). In terms of domain architecture, Clp R spans 99-240 (FDMFTDKAIK…RSEVIRMISD (142 aa)). Repeat regions lie at residues 102-167 (FTDK…AGRG) and 177-240 (FTPA…MISD). Residues 264-511 (LLEYGTNLTK…LVRLRNAQLP (248 aa)) are i. 309–316 (GEPGVGKT) contributes to the ATP binding site. The 36-residue stretch at 518–553 (EKKLKKIMAEKSEAIRSQDFEKAGALRGEEVELKSE) folds into the UVR domain. The II stretch occupies residues 579-770 (VTEADVQHIV…LIIMTSNVGS (192 aa)). An ATP-binding site is contributed by 653 to 660 (GPTGVGKS).

This sequence belongs to the ClpA/ClpB family. ClpC subfamily.

It is found in the plastid. Its subcellular location is the chloroplast. Functionally, molecular chaperone that may interact with a ClpP-like protease involved in degradation of denatured proteins in the chloroplast. The sequence is that of Chaperone protein ClpC3, chloroplastic (CLPC3) from Oryza sativa subsp. japonica (Rice).